A 74-amino-acid polypeptide reads, in one-letter code: Exodeoxyribonuclease 7 small subunit (74 aa).

It belongs to the XseB family. As to quaternary structure, heterooligomer composed of large and small subunits.

It is found in the cytoplasm. The catalysed reaction is Exonucleolytic cleavage in either 5'- to 3'- or 3'- to 5'-direction to yield nucleoside 5'-phosphates.. Its function is as follows. Bidirectionally degrades single-stranded DNA into large acid-insoluble oligonucleotides, which are then degraded further into small acid-soluble oligonucleotides. The sequence is that of Exodeoxyribonuclease 7 small subunit from Ruthia magnifica subsp. Calyptogena magnifica.